We begin with the raw amino-acid sequence, 284 residues long: MDFIRAIILGIIEGITEWLPISSTGHLIIADEFIRLNQSAAFKEMFDVVIQLGAILSVVVLYFHKLNPFNKLNPADKQKTPREIQLTWRLWLKVLIAALPAAIIGLPLNDWLDKHFYHFVPVAFMLIIYGVAFIVIERRWVPNHEFSVMDIDRLPYRAALYIGLFQVLSLLPGTSRSGATIVGALLIGVSREVAAEFTFFLGIPVMFGASFIKILHFFKNGNSLNLEQFGVLLVACLVAFGVSMIAIKFLTDYVKKHDFTFFGKYRIVLGIVLLIYAAFKAFLG.

8 helical membrane passes run 7–27 (IILG…TGHL), 44–64 (EMFD…LYFH), 90–110 (LWLK…PLND), 116–136 (FYHF…FIVI), 167–187 (VLSL…ALLI), 197–217 (FTFF…ILHF), 229–249 (FGVL…AIKF), and 259–279 (FTFF…YAAF).

Belongs to the UppP family.

The protein resides in the cell membrane. The enzyme catalyses di-trans,octa-cis-undecaprenyl diphosphate + H2O = di-trans,octa-cis-undecaprenyl phosphate + phosphate + H(+). Catalyzes the dephosphorylation of undecaprenyl diphosphate (UPP). Confers resistance to bacitracin. This chain is Undecaprenyl-diphosphatase, found in Lactococcus lactis subsp. cremoris (strain SK11).